Here is a 177-residue protein sequence, read N- to C-terminus: MSRVAKAPVTIPAGVEVTLNEQTLTVKGSKGSLTRVINSAVNVVIEDAQVKFLPVEGVDGAWAQAGTARALVNNMVVGVSQGFVKKLKLVGVGYRAKIAGSDLDLTLGFSHPLVHKLPAGVTAECPSQTEIVLSGVDKQLIGQVAAEIRGYRPPEPYKGKGVRYDDEVVRRKEAKKK.

This sequence belongs to the universal ribosomal protein uL6 family. Part of the 50S ribosomal subunit.

Functionally, this protein binds to the 23S rRNA, and is important in its secondary structure. It is located near the subunit interface in the base of the L7/L12 stalk, and near the tRNA binding site of the peptidyltransferase center. The chain is Large ribosomal subunit protein uL6 from Shewanella denitrificans (strain OS217 / ATCC BAA-1090 / DSM 15013).